The primary structure comprises 158 residues: NAD(P)H-quinone oxidoreductase subunit J, chloroplastic (158 aa).

It belongs to the complex I 30 kDa subunit family. As to quaternary structure, NDH is composed of at least 16 different subunits, 5 of which are encoded in the nucleus.

It localises to the plastid. The protein resides in the chloroplast thylakoid membrane. It carries out the reaction a plastoquinone + NADH + (n+1) H(+)(in) = a plastoquinol + NAD(+) + n H(+)(out). The enzyme catalyses a plastoquinone + NADPH + (n+1) H(+)(in) = a plastoquinol + NADP(+) + n H(+)(out). Its function is as follows. NDH shuttles electrons from NAD(P)H:plastoquinone, via FMN and iron-sulfur (Fe-S) centers, to quinones in the photosynthetic chain and possibly in a chloroplast respiratory chain. The immediate electron acceptor for the enzyme in this species is believed to be plastoquinone. Couples the redox reaction to proton translocation, and thus conserves the redox energy in a proton gradient. This is NAD(P)H-quinone oxidoreductase subunit J, chloroplastic from Lactuca sativa (Garden lettuce).